A 475-amino-acid polypeptide reads, in one-letter code: ADP-ribose glycohydrolase MACROD2 (475 aa).

In terms of domain architecture, Macro spans Q59 to F240. Substrate is bound by residues G77–I79, A90–N92, and G97–D102. A Glycyl lysine isopeptide (Lys-Gly) (interchain with G-Cter in ubiquitin) cross-link involves residue K170. Substrate is bound by residues I185–G191 and F224. Disordered stretches follow at residues P241 to A306 and G324 to Q475. 2 stretches are compositionally biased toward basic and acidic residues: residues A251 to E261 and S335 to M359. The span at T360 to N375 shows a compositional bias: polar residues. Residues D376–A386 are compositionally biased toward basic and acidic residues. 2 stretches are compositionally biased toward polar residues: residues E387–Q402 and S440–S469.

This sequence belongs to the MacroD-type family. MacroD1/2-like subfamily. Interacts with ADP-ribosylated PARP1. Expressed in the kidney.

It localises to the nucleus. It catalyses the reaction 2''-O-acetyl-ADP-D-ribose + H2O = ADP-D-ribose + acetate + H(+). The enzyme catalyses 4-O-(ADP-D-ribosyl)-L-aspartyl-[protein] + H2O = L-aspartyl-[protein] + ADP-D-ribose + H(+). The catalysed reaction is 5-O-(ADP-D-ribosyl)-L-glutamyl-[protein] + H2O = L-glutamyl-[protein] + ADP-D-ribose + H(+). It carries out the reaction alpha-NAD(+) + H2O = ADP-D-ribose + nicotinamide + H(+). Subject to product inhibition by ADP-ribose. Its function is as follows. Removes ADP-ribose from aspartate and glutamate residues in proteins bearing a single ADP-ribose moiety. Inactive towards proteins bearing poly-ADP-ribose. Deacetylates O-acetyl-ADP ribose, a signaling molecule generated by the deacetylation of acetylated lysine residues in histones and other proteins. The polypeptide is ADP-ribose glycohydrolase MACROD2 (Mus musculus (Mouse)).